The primary structure comprises 1189 residues: Zinc finger CCCH domain-containing protein 6 (1189 aa).

Basic and acidic residues predominate over residues 1–12; sequence MTDSEHAGHDRE. Residues 1–105 form a disordered region; that stretch reads MTDSEHAGHD…HKKRTGFYRD (105 aa). Over residues 13 to 28 the composition is skewed to acidic residues; the sequence is DGELEDGEIDDAGFEE. A coiled-coil region spans residues 27–73; it reads EEIQEKEAKENEKQKSEKAYRKSRKKHKKEREKKKSKRRKREKHKHN. A compositionally biased stretch (basic and acidic residues) spans 29–46; sequence IQEKEAKENEKQKSEKAY. The span at 47 to 73 shows a compositional bias: basic residues; the sequence is RKSRKKHKKEREKKKSKRRKREKHKHN. 3 consecutive C3H1-type zinc fingers follow at residues 273 to 299, 301 to 328, and 329 to 352; these read KGKQICKYFLEGRCIKGDQCKFDHDAE, EKRKEICKFYLQGYCTKGENCIYMHNEF, and PCKFYHSGAKCYQGDNCKFSHDDL. A coiled-coil region spans residues 353-385; it reads TKETKKLLDKVLNTDEELINEDERELEELRKRG. 5 disordered regions span residues 451-530, 630-659, 676-755, 947-1026, and 1051-1189; these read FYTS…GPQN, PPVVQDSPNHGSGSDGSSTRTGHGPLPVPG, YQED…GNQV, LEQF…PYAP, and PRDH…SPFC. Positions 461 to 478 are enriched in low complexity; that stretch reads QFQGSSPHPQHIYSSGSS. The segment covering 505–525 has biased composition (pro residues); sequence AGPPGLPVPQSPPLPPGPPEI. A compositionally biased stretch (low complexity) spans 639–659; that stretch reads HGSGSDGSSTRTGHGPLPVPG. The span at 718–741 shows a compositional bias: polar residues; it reads KTLQKQTETLRNQQQPSTELSTPT. The segment covering 961–973 has biased composition (basic and acidic residues); that stretch reads GDPRLQKNFDPRL. Low complexity-rich tracts occupy residues 1009–1020 and 1056–1069; these read SGAGTSNSGSGA and SSSTSELATASSGE. The residue at position 1158 (Ser-1158) is a Phosphoserine. The segment covering 1164 to 1179 has biased composition (basic and acidic residues); the sequence is DPGRETDDKSLKEVFK.

In Homo sapiens (Human), this protein is Zinc finger CCCH domain-containing protein 6 (ZC3H6).